A 592-amino-acid chain; its full sequence is MKEFKLAVYVTAPTLRGLNEERIKKLIEKFKELGVVKIYLENYRDGIMLDVNTMIKFKEVFEREFEVAGGMAIGTWGEGWGEMENYGFKVACIADERNREMVKNVVEEQAKVFDEIIIDDFWANWCHSEKDVKLFNSMYGVNFTKGTLLKMLRDPVISRLWCEYSSSLVYNASRDYVVKPAKNVNEKVKITLKVAEWREDFYHRGLKLDKLAEIFDNIYVGTEAREYTARYGSLYIVDYVKGLVGDKLKGVWFDTFIGGEGGDYGSFKTYLQQFILSAFGLTEEITLFEAGDILDPERRSLFESIMENKEKVQRWREDIREYASIGLKRIPLQHFMTQRFDKYVEDHLGIIGIPLEVSNVVNPSDILLITESDIYHLDIVDLLNRGVNLMFTASAAKKLIEVLGDTALKILGVGNLIYDSVSVNALTRDGKTFYWSYYKRQANFPVGPIFSLNGATPILYAYNGVELHPVVFQNTYSNSKVYVLSLTTYLPYLISEFYPSVARQIIRDIVGDHIGIRAIATYPFLFSLIIKRDGLVTVLNLNDFPIRLTLSVDPKRYKINNIEGMKVLQSNENEIRIRLKENSFGIVRLEKV.

This is an uncharacterized protein from Saccharolobus solfataricus (strain ATCC 35092 / DSM 1617 / JCM 11322 / P2) (Sulfolobus solfataricus).